The following is a 219-amino-acid chain: Mediator of RNA polymerase II transcription subunit 21 (219 aa).

The stretch at 86–125 forms a coiled coil; sequence SAEEQLHKIDSLQKKLVDIEDEKIHAIKKKDDLLKQVDDL. The segment at 141–219 is disordered; sequence SLAPENVQED…ISESISPGKI (79 aa). Composition is skewed to basic and acidic residues over residues 166-181 and 191-204; these read IEQK…KIEG and SDSK…FMDK. Residues 210 to 219 show a composition bias toward polar residues; the sequence is ISESISPGKI.

The protein belongs to the Mediator complex subunit 21 family. In terms of assembly, component of the Mediator complex.

The protein localises to the nucleus. Its function is as follows. Component of the Mediator complex, a coactivator involved in the regulated transcription of nearly all RNA polymerase II-dependent genes. Mediator functions as a bridge to convey information from gene-specific regulatory proteins to the basal RNA polymerase II transcription machinery. Mediator is recruited to promoters by direct interactions with regulatory proteins and serves as a scaffold for the assembly of a functional preinitiation complex with RNA polymerase II and the general transcription factors. This Candida glabrata (strain ATCC 2001 / BCRC 20586 / JCM 3761 / NBRC 0622 / NRRL Y-65 / CBS 138) (Yeast) protein is Mediator of RNA polymerase II transcription subunit 21 (SRB7).